Consider the following 529-residue polypeptide: Membrane-bound lytic murein transglycosylase F (529 aa).

The first 27 residues, M1–I27, serve as a signal peptide directing secretion. The interval E28 to I287 is non-LT domain. Positions G288–P529 are LT domain. The active site involves E332. The tract at residues E510–P529 is disordered. Residues S519–P529 are compositionally biased toward polar residues.

This sequence in the N-terminal section; belongs to the bacterial solute-binding protein 3 family. It in the C-terminal section; belongs to the transglycosylase Slt family.

It is found in the cell outer membrane. It catalyses the reaction Exolytic cleavage of the (1-&gt;4)-beta-glycosidic linkage between N-acetylmuramic acid (MurNAc) and N-acetylglucosamine (GlcNAc) residues in peptidoglycan, from either the reducing or the non-reducing ends of the peptidoglycan chains, with concomitant formation of a 1,6-anhydrobond in the MurNAc residue.. Murein-degrading enzyme that degrades murein glycan strands and insoluble, high-molecular weight murein sacculi, with the concomitant formation of a 1,6-anhydromuramoyl product. Lytic transglycosylases (LTs) play an integral role in the metabolism of the peptidoglycan (PG) sacculus. Their lytic action creates space within the PG sacculus to allow for its expansion as well as for the insertion of various structures such as secretion systems and flagella. In Vibrio vulnificus (strain CMCP6), this protein is Membrane-bound lytic murein transglycosylase F.